The sequence spans 211 residues: Regulator of G-protein signaling 2 (211 aa).

Disordered regions lie at residues arginine 14–methionine 33 and leucine 49–alanine 68. The segment at lysine 32 to glutamine 66 is necessary for membrane association. Residues leucine 79–cysteine 116 form a necessary to inhibit protein synthesis region. The region spanning alanine 83–cysteine 199 is the RGS domain.

As to quaternary structure, interacts with GNAQ. Does not interact with GNAI1 and GNAI3. Interacts with EIF2B5. Interacts with PRKG1 (isoform alpha). Post-translationally, phosphorylated by protein kinase C. Phosphorylation by PRKG1 leads to activation of RGS2 activity. Expressed in acute myelogenous leukemia (AML) and in acute lymphoblastic leukemia (ALL).

Its subcellular location is the cell membrane. It is found in the cytoplasm. It localises to the nucleus. The protein resides in the nucleolus. The protein localises to the mitochondrion. Functionally, regulates G protein-coupled receptor signaling cascades. Inhibits signal transduction by increasing the GTPase activity of G protein alpha subunits, thereby driving them into their inactive GDP-bound form. It is involved in the negative regulation of the angiotensin-activated signaling pathway. Plays a role in the regulation of blood pressure in response to signaling via G protein-coupled receptors and GNAQ. Plays a role in regulating the constriction and relaxation of vascular smooth muscle. Binds EIF2B5 and blocks its activity, thereby inhibiting the translation of mRNA into protein. The protein is Regulator of G-protein signaling 2 (RGS2) of Homo sapiens (Human).